Consider the following 262-residue polypeptide: ATP synthase subunit delta (262 aa).

Belongs to the ATPase delta chain family. F-type ATPases have 2 components, F(1) - the catalytic core - and F(0) - the membrane proton channel. F(1) has five subunits: alpha(3), beta(3), gamma(1), delta(1), epsilon(1). F(0) has three main subunits: a(1), b(2) and c(10-14). The alpha and beta chains form an alternating ring which encloses part of the gamma chain. F(1) is attached to F(0) by a central stalk formed by the gamma and epsilon chains, while a peripheral stalk is formed by the delta and b chains.

The protein localises to the cell membrane. Its function is as follows. F(1)F(0) ATP synthase produces ATP from ADP in the presence of a proton or sodium gradient. F-type ATPases consist of two structural domains, F(1) containing the extramembraneous catalytic core and F(0) containing the membrane proton channel, linked together by a central stalk and a peripheral stalk. During catalysis, ATP synthesis in the catalytic domain of F(1) is coupled via a rotary mechanism of the central stalk subunits to proton translocation. In terms of biological role, this protein is part of the stalk that links CF(0) to CF(1). It either transmits conformational changes from CF(0) to CF(1) or is implicated in proton conduction. This is ATP synthase subunit delta from Tropheryma whipplei (strain TW08/27) (Whipple's bacillus).